Here is a 743-residue protein sequence, read N- to C-terminus: DNA ligase 2 (743 aa).

NAD(+) contacts are provided by residues Asp-45 to Asp-49, Ser-94 to Leu-95, and Glu-125. The active-site N6-AMP-lysine intermediate is the Lys-127. NAD(+)-binding residues include Arg-148, Glu-185, Lys-301, and Lys-325. 4 residues coordinate Zn(2+): Cys-419, Cys-422, Cys-438, and Cys-444. The BRCT domain maps to Glu-639–Pro-728. A disordered region spans residues Glu-720 to Glu-743. Residues Ala-725–Glu-743 show a composition bias toward low complexity.

It belongs to the NAD-dependent DNA ligase family. LigA subfamily. It depends on Mg(2+) as a cofactor. Mn(2+) is required as a cofactor.

The catalysed reaction is NAD(+) + (deoxyribonucleotide)n-3'-hydroxyl + 5'-phospho-(deoxyribonucleotide)m = (deoxyribonucleotide)n+m + AMP + beta-nicotinamide D-nucleotide.. Its function is as follows. DNA ligase that catalyzes the formation of phosphodiester linkages between 5'-phosphoryl and 3'-hydroxyl groups in double-stranded DNA using NAD as a coenzyme and as the energy source for the reaction. It is essential for DNA replication and repair of damaged DNA. The sequence is that of DNA ligase 2 from Streptomyces griseus subsp. griseus (strain JCM 4626 / CBS 651.72 / NBRC 13350 / KCC S-0626 / ISP 5235).